The chain runs to 84 residues: Defensin-like protein 116 (84 aa).

The signal sequence occupies residues 1 to 24 (MAITKNMLVVLLLTIIFVTSSVHC). 4 disulfide bridges follow: Cys-40–Cys-80, Cys-46–Cys-71, Cys-55–Cys-78, and Cys-59–Cys-79.

It belongs to the DEFL family.

The protein localises to the secreted. The polypeptide is Defensin-like protein 116 (Arabidopsis thaliana (Mouse-ear cress)).